Reading from the N-terminus, the 186-residue chain is ATP-dependent protease subunit HslV (186 aa).

Threonine 13 is an active-site residue. Na(+) contacts are provided by alanine 167, cysteine 170, and threonine 173.

This sequence belongs to the peptidase T1B family. HslV subfamily. As to quaternary structure, a double ring-shaped homohexamer of HslV is capped on each side by a ring-shaped HslU homohexamer. The assembly of the HslU/HslV complex is dependent on binding of ATP.

The protein resides in the cytoplasm. The enzyme catalyses ATP-dependent cleavage of peptide bonds with broad specificity.. With respect to regulation, allosterically activated by HslU binding. Protease subunit of a proteasome-like degradation complex believed to be a general protein degrading machinery. This Allorhizobium ampelinum (strain ATCC BAA-846 / DSM 112012 / S4) (Agrobacterium vitis (strain S4)) protein is ATP-dependent protease subunit HslV.